Here is a 635-residue protein sequence, read N- to C-terminus: Threonine--tRNA ligase (635 aa).

The region spanning 1–61 (MIAITLPDGS…DRDVALAIIT (61 aa)) is the TGS domain. The tract at residues 242–533 (DHRKLGKSLD…LLENHAGALP (292 aa)) is catalytic. Positions 333, 384, and 510 each coordinate Zn(2+).

This sequence belongs to the class-II aminoacyl-tRNA synthetase family. Homodimer. The cofactor is Zn(2+).

Its subcellular location is the cytoplasm. The enzyme catalyses tRNA(Thr) + L-threonine + ATP = L-threonyl-tRNA(Thr) + AMP + diphosphate + H(+). Catalyzes the attachment of threonine to tRNA(Thr) in a two-step reaction: L-threonine is first activated by ATP to form Thr-AMP and then transferred to the acceptor end of tRNA(Thr). Also edits incorrectly charged L-seryl-tRNA(Thr). This Cupriavidus pinatubonensis (strain JMP 134 / LMG 1197) (Cupriavidus necator (strain JMP 134)) protein is Threonine--tRNA ligase.